The primary structure comprises 258 residues: Imidazole glycerol phosphate synthase subunit HisF (258 aa).

Active-site residues include D11 and D130.

This sequence belongs to the HisA/HisF family. Heterodimer of HisH and HisF.

The protein resides in the cytoplasm. The enzyme catalyses 5-[(5-phospho-1-deoxy-D-ribulos-1-ylimino)methylamino]-1-(5-phospho-beta-D-ribosyl)imidazole-4-carboxamide + L-glutamine = D-erythro-1-(imidazol-4-yl)glycerol 3-phosphate + 5-amino-1-(5-phospho-beta-D-ribosyl)imidazole-4-carboxamide + L-glutamate + H(+). Its pathway is amino-acid biosynthesis; L-histidine biosynthesis; L-histidine from 5-phospho-alpha-D-ribose 1-diphosphate: step 5/9. Functionally, IGPS catalyzes the conversion of PRFAR and glutamine to IGP, AICAR and glutamate. The HisF subunit catalyzes the cyclization activity that produces IGP and AICAR from PRFAR using the ammonia provided by the HisH subunit. The sequence is that of Imidazole glycerol phosphate synthase subunit HisF from Escherichia coli O127:H6 (strain E2348/69 / EPEC).